A 526-amino-acid chain; its full sequence is Butyrophilin subfamily 1 member A1 (526 aa).

The first 26 residues, 1 to 26 (MAVFPSSGLPRCLLTLILLQLPKLDS), serve as a signal peptide directing secretion. Ig-like V-type domains follow at residues 27-138 (APFD…ALVH) and 148-234 (PHIS…VEIS). The Extracellular portion of the chain corresponds to 27-242 (APFDVIGPPE…ISIPASSLPR (216 aa)). 2 disulfides stabilise this stretch: C50–C124 and C164–C218. N-linked (GlcNAc...) asparagine glycosylation is found at N55 and N215. The chain crosses the membrane as a helical span at residues 243–269 (LTPWIVAVAVILMVLGLLTIGSIFFTW). At 270–526 (RLYNERPRER…IPTQPSQGAP (257 aa)) the chain is on the cytoplasmic side. One can recognise a B30.2/SPRY domain in the interval 285-479 (SKERLLEELK…LTICPIADGP (195 aa)). The tract at residues 495-526 (IPLSPMGEDSAPRDADTLHSKLIPTQPSQGAP) is disordered. Basic and acidic residues predominate over residues 504–513 (SAPRDADTLH). Residues 517–526 (IPTQPSQGAP) show a composition bias toward polar residues.

Belongs to the immunoglobulin superfamily. BTN/MOG family. Seems to associate with xanthine dehydrogenase/oxidase. In terms of processing, N-glycosylated.

Its subcellular location is the membrane. It localises to the secreted. Functionally, may function in the secretion of milk-fat droplets. May act as a specific membrane-associated receptor for the association of cytoplasmic droplets with the apical plasma membrane. Inhibits the proliferation of CD4 and CD8 T-cells activated by anti-CD3 antibodies, T-cell metabolism and IL2 and IFNG secretion. In Homo sapiens (Human), this protein is Butyrophilin subfamily 1 member A1 (BTN1A1).